Consider the following 676-residue polypeptide: DNA ligase (676 aa).

NAD(+)-binding positions include 34 to 38 (DQEFD), 83 to 84 (SL), and Glu117. Residue Lys119 is the N6-AMP-lysine intermediate of the active site. The NAD(+) site is built by Arg140, Glu177, Lys285, and Lys309. Positions 403, 406, 427, and 434 each coordinate Zn(2+). The 82-residue stretch at 595 to 676 (NNNGLLKNKT…EWLKMLNKSG (82 aa)) folds into the BRCT domain.

It belongs to the NAD-dependent DNA ligase family. LigA subfamily. Mg(2+) serves as cofactor. It depends on Mn(2+) as a cofactor.

It carries out the reaction NAD(+) + (deoxyribonucleotide)n-3'-hydroxyl + 5'-phospho-(deoxyribonucleotide)m = (deoxyribonucleotide)n+m + AMP + beta-nicotinamide D-nucleotide.. In terms of biological role, DNA ligase that catalyzes the formation of phosphodiester linkages between 5'-phosphoryl and 3'-hydroxyl groups in double-stranded DNA using NAD as a coenzyme and as the energy source for the reaction. It is essential for DNA replication and repair of damaged DNA. The chain is DNA ligase from Pelagibacter ubique (strain HTCC1062).